Consider the following 399-residue polypeptide: 1-deoxy-D-xylulose 5-phosphate reductoisomerase (399 aa).

NADPH-binding residues include T13, G14, S15, I16, and N127. A 1-deoxy-D-xylulose 5-phosphate-binding site is contributed by K128. E129 is an NADPH binding site. D153 contacts Mn(2+). Residues S154, E155, S187, and H210 each coordinate 1-deoxy-D-xylulose 5-phosphate. Mn(2+) is bound at residue E155. G216 is an NADPH binding site. S223, N228, K229, and E232 together coordinate 1-deoxy-D-xylulose 5-phosphate. Residue E232 coordinates Mn(2+).

Belongs to the DXR family. The cofactor is Mg(2+). Requires Mn(2+) as cofactor.

The enzyme catalyses 2-C-methyl-D-erythritol 4-phosphate + NADP(+) = 1-deoxy-D-xylulose 5-phosphate + NADPH + H(+). It functions in the pathway isoprenoid biosynthesis; isopentenyl diphosphate biosynthesis via DXP pathway; isopentenyl diphosphate from 1-deoxy-D-xylulose 5-phosphate: step 1/6. Catalyzes the NADPH-dependent rearrangement and reduction of 1-deoxy-D-xylulose-5-phosphate (DXP) to 2-C-methyl-D-erythritol 4-phosphate (MEP). This is 1-deoxy-D-xylulose 5-phosphate reductoisomerase from Bordetella parapertussis (strain 12822 / ATCC BAA-587 / NCTC 13253).